Consider the following 160-residue polypeptide: Transcription elongation factor GreA (160 aa).

The stretch at 50 to 70 forms a coiled coil; that stretch reads AAREQQSFNEGRIQELEAKLS.

This sequence belongs to the GreA/GreB family.

In terms of biological role, necessary for efficient RNA polymerase transcription elongation past template-encoded arresting sites. The arresting sites in DNA have the property of trapping a certain fraction of elongating RNA polymerases that pass through, resulting in locked ternary complexes. Cleavage of the nascent transcript by cleavage factors such as GreA or GreB allows the resumption of elongation from the new 3'terminus. GreA releases sequences of 2 to 3 nucleotides. This chain is Transcription elongation factor GreA, found in Legionella pneumophila (strain Corby).